We begin with the raw amino-acid sequence, 576 residues long: MDANSINSFFLIGALLTAVSVLLSPMSSRLGIPILLIFLAVGILAGEDGPGGILFDDYSTAYLVSNLALAIILLDGGMRTRVASFRVALWPALSLATFGVAITTSITGMMAAWLFDLHWLQGLLVGAIVGSTDAAAVFSLLKGRSLNERVGATLEIESGSNDPMAVFLTVTLIAILANVDTEMSFSFMFISFIKQFGLGICLGLGGGWMLWKLVNLSKLADGLYSILVLSGGLIIYAASNKLGGSGILSIYLVGLFLGNKPTRGRHAILNVLDGMTWVSQIGMFLVLGLLLTPSDLVDILIPGFALAFGMILFARPVAVWISLLPFKSFSSRDRWFISWVGLRGAVPIILAVFPMMAGLPGAQLYFNLAFFVVLVSLLVQGASLTTAARLAKVELPPKPLPVSRSGVEIYPSSEWEVFVYRLSESKWCIGEPLKRLAMPDGTRIAAVFRNDTLLHPSGSTRLEAGDILCVLGQEKSLEALSNLFSQAPENKEVQRFFGDFFIETDVKLADLAPIYGLSLDNLADDMTVADLVVSQLGANPVLGDQFQWQSLHWVVAGLYEGKVTNVGIRLPTEHSL.

13 helical membrane passes run 6-26, 34-54, 58-78, 87-107, 109-129, 163-183, 185-205, 219-239, 242-262, 271-291, 299-319, 335-355, and 359-379; these read INSF…LSPM, ILLI…GGIL, YSTA…DGGM, VALW…TSIT, MMAA…GAIV, PMAV…DTEM, FSFM…LGLG, LADG…YAAS, LGGS…NKPT, VLDG…GLLL, ILIP…PVAV, WFIS…VFPM, and LPGA…SLLV. Positions 405–486 constitute an RCK C-terminal domain; it reads SGVEIYPSSE…LEALSNLFSQ (82 aa).

The protein belongs to the monovalent cation:proton antiporter 1 (CPA1) transporter (TC 2.A.36) family. NhaP2 subfamily.

It is found in the cell inner membrane. The enzyme catalyses K(+)(in) + H(+)(out) = K(+)(out) + H(+)(in). K(+)/H(+) antiporter that extrudes potassium in exchange for external protons and maintains the internal concentration of potassium under toxic levels. This chain is K(+)/H(+) antiporter NhaP2, found in Shewanella baltica (strain OS223).